The primary structure comprises 537 residues: Inositol phosphorylceramide glucuronosyltransferase 1 (537 aa).

The chain crosses the membrane as a helical span at residues 6–26 (TSLWVLLLALVSIQLNGSFGS). 2 residues coordinate Mn(2+): aspartate 124 and aspartate 126. Residues 124-126 (DAD), 153-155 (NSG), 180-184 (TGGDQ), and 248-255 (HYTLGPLK) each bind substrate. Histidine 248 is a binding site for Mn(2+). The next 5 helical transmembrane spans lie at 293-313 (DELV…FCIY), 375-395 (VSVV…FAIV), 406-426 (VLVY…FLLF), 468-488 (MAFL…TALF), and 494-514 (MVGL…HLAV).

This sequence belongs to the glycosyltransferase 8 family. Glycogenin subfamily. Requires Mn(2+) as cofactor. In terms of tissue distribution, expressed in seedlings, roots, leaves, stems and siliques.

Its subcellular location is the golgi apparatus membrane. It catalyses the reaction glucuronate acceptor + UDP-alpha-D-glucuronate = acceptor beta-D-glucuronoside + UDP + H(+). The enzyme catalyses a 1D-myo-inositol-1-phospho-N-[(R)-2-hydroxy-very-long-chain fatty acyl]-(R)-4-hydroxysphingoid base + UDP-alpha-D-glucuronate = an alpha-D-glucuronosyl-(1&lt;-&gt;6)-1D-myo-inositol-1-phospho-N-[(R)-2-hydroxy-very-long-chain fatty acyl]-(R)-4-hydroxysphingoid base + UDP + H(+). It participates in sphingolipid metabolism. Its function is as follows. Mediates the transfer of glucuronic acid (GlcA) from UDP-GlcA to glycosyl inositol phosphorylceramides (GIPCs). The formation of GIPCs sphingolipids is essential for pollen function, plant growth and defense. Required for global fitness. This is Inositol phosphorylceramide glucuronosyltransferase 1 from Arabidopsis thaliana (Mouse-ear cress).